A 417-amino-acid chain; its full sequence is Gamma-glutamyl phosphate reductase (417 aa).

Belongs to the gamma-glutamyl phosphate reductase family.

Its subcellular location is the cytoplasm. It catalyses the reaction L-glutamate 5-semialdehyde + phosphate + NADP(+) = L-glutamyl 5-phosphate + NADPH + H(+). It participates in amino-acid biosynthesis; L-proline biosynthesis; L-glutamate 5-semialdehyde from L-glutamate: step 2/2. Its function is as follows. Catalyzes the NADPH-dependent reduction of L-glutamate 5-phosphate into L-glutamate 5-semialdehyde and phosphate. The product spontaneously undergoes cyclization to form 1-pyrroline-5-carboxylate. In Escherichia coli O157:H7, this protein is Gamma-glutamyl phosphate reductase.